The chain runs to 387 residues: MSVIKMTDLELAGKRVFIRADLNVPVKDGKVTSDARILASLPTIKLCLEAGAKVMVTSHLGRPTEGEYNEEFSLAPVVNYLNDALDCDVKLAKDYLDGLELNAGELVVLENVRFNKGEKKNEEALSKKYAALCDIFVMDAFGTAHRAQASTHGVGMNAPIACAGPLLAAELEALGKAMDNPARPLVAIVGGSKVSTKLTVLESLSKIADQLVVGGGIANTFIAAQGHNVGKSLYEADLVETAKKLMVECAIPVATDVACAKAFDENAEAEIKNVADVQDDDMIFDLGPDSTAVLADIIKNAKTILWNGPVGVFEFKNFEAGTAGISKAIADSEGFSVAGGGDTLAAIDKFGIKADVSYISTGGGAFLEFVEGKVLPAVAMLEERAKA.

Substrate-binding positions include 21 to 23 (DLN), R36, 59 to 62 (HLGR), R113, and R146. Residues K197, E314, and 340-343 (GGDT) each bind ATP.

This sequence belongs to the phosphoglycerate kinase family. As to quaternary structure, monomer.

The protein localises to the cytoplasm. The catalysed reaction is (2R)-3-phosphoglycerate + ATP = (2R)-3-phospho-glyceroyl phosphate + ADP. It participates in carbohydrate degradation; glycolysis; pyruvate from D-glyceraldehyde 3-phosphate: step 2/5. This chain is Phosphoglycerate kinase, found in Aliivibrio salmonicida (strain LFI1238) (Vibrio salmonicida (strain LFI1238)).